Reading from the N-terminus, the 276-residue chain is Aquaporin-6 (276 aa).

Over M1–K22 the chain is Cytoplasmic. The chain crosses the membrane as a helical span at residues A23–L43. Topologically, residues P44 to S51 are extracellular. Residues V52 to S70 traverse the membrane as a helical segment. The Cytoplasmic portion of the chain corresponds to W71–G75. The discontinuously helical intramembrane region spans A76 to A85. Positions N79–A81 match the NPA 1 motif. The Cytoplasmic portion of the chain corresponds to Y86–R96. A helical transmembrane segment spans residues A97–V118. Topologically, residues T119–T138 are extracellular. A glycan (N-linked (GlcNAc...) asparagine) is linked at N134. A helical membrane pass occupies residues G139–S159. The Cytoplasmic portion of the chain corresponds to M160–T165. The helical transmembrane segment at L166–I185 threads the bilayer. At Y186–G189 the chain is on the extracellular side. The segment at residues C190–V202 is an intramembrane region (discontinuously helical). Residues N193–A195 carry the NPA 2 motif. The Extracellular portion of the chain corresponds to I203–H210. The chain crosses the membrane as a helical span at residues W211–I231. At L232–V276 the chain is on the cytoplasmic side.

Belongs to the MIP/aquaporin (TC 1.A.8) family. In terms of assembly, homotetramer; each monomer provides an independent solute pore. In terms of processing, N-glycosylated. In terms of tissue distribution, kidney.

It is found in the cytoplasmic vesicle membrane. It carries out the reaction nitrate(in) = nitrate(out). The enzyme catalyses iodide(out) = iodide(in). It catalyses the reaction bromide(in) = bromide(out). The catalysed reaction is chloride(in) = chloride(out). It carries out the reaction Na(+)(in) = Na(+)(out). The enzyme catalyses H2O(in) = H2O(out). It catalyses the reaction CO2(out) = CO2(in). The catalysed reaction is NH4(+)(in) = NH4(+)(out). Activated by mercury and pH-gated, anion permeability is observed at pH 5.5 and increases markedly at pH 4.0. Selectivity for chloride increases at low pH. The water channel activity is stimulated by mercury by opposition to other aquaporins. In terms of biological role, aquaporins form homotetrameric transmembrane channels, with each monomer independently mediating water transport across the plasma membrane along its osmotic gradient. Unlike classical aquaporins, AQP6 is an intracellular channel with selective anion permeability, particularly for nitrate, and exhibits very low water permeability. It may also facilitate the transport of gases, such as CO2 and NH4(+), as demonstrated in vitro. In Rattus norvegicus (Rat), this protein is Aquaporin-6.